The primary structure comprises 123 residues: Small ribosomal subunit protein uS13 (123 aa).

The disordered stretch occupies residues 97–123 (PVRGQKTKTNARTRKGPKKTVGRKKKK). Positions 101 to 123 (QKTKTNARTRKGPKKTVGRKKKK) are enriched in basic residues.

The protein belongs to the universal ribosomal protein uS13 family. As to quaternary structure, part of the 30S ribosomal subunit. Forms a loose heterodimer with protein S19. Forms two bridges to the 50S subunit in the 70S ribosome.

Its function is as follows. Located at the top of the head of the 30S subunit, it contacts several helices of the 16S rRNA. In the 70S ribosome it contacts the 23S rRNA (bridge B1a) and protein L5 of the 50S subunit (bridge B1b), connecting the 2 subunits; these bridges are implicated in subunit movement. Contacts the tRNAs in the A and P-sites. This chain is Small ribosomal subunit protein uS13, found in Alkaliphilus oremlandii (strain OhILAs) (Clostridium oremlandii (strain OhILAs)).